We begin with the raw amino-acid sequence, 275 residues long: Anthracycline biosynthesis protein DnrV (275 aa).

VOC domains follow at residues 8-136 (APAW…VWRK) and 150-263 (SVGW…VVEL).

Its pathway is antibiotic biosynthesis; daunorubicin biosynthesis. It functions in the pathway antibiotic biosynthesis; carminomycin biosynthesis. In terms of biological role, involved in the biosynthesis of the anthracyclines carminomycin and daunorubicin (daunomycin) which are aromatic polyketide antibiotics that exhibit high cytotoxicity and are widely applied in the chemotherapy of a variety of cancers. In vivo, it acts jointly with DoxA in the conversion of 13-deoxycarminomycin and 13-deoxydaunorubicin to yield carminomycin and daunorubicin, respectively. In vitro, it also acts jointly with DoxA in the C-14 hydroxylation of daunorubicin to form doxorubicin, although this strain is not a doxorubicin producer. The sequence is that of Anthracycline biosynthesis protein DnrV (dnrV) from Streptomyces peucetius.